We begin with the raw amino-acid sequence, 1373 residues long: DNA-directed RNA polymerase subunit beta (1373 aa).

It belongs to the RNA polymerase beta chain family. As to quaternary structure, the RNAP catalytic core consists of 2 alpha, 1 beta, 1 beta' and 1 omega subunit. When a sigma factor is associated with the core the holoenzyme is formed, which can initiate transcription.

The enzyme catalyses RNA(n) + a ribonucleoside 5'-triphosphate = RNA(n+1) + diphosphate. DNA-dependent RNA polymerase catalyzes the transcription of DNA into RNA using the four ribonucleoside triphosphates as substrates. The polypeptide is DNA-directed RNA polymerase subunit beta (Rickettsia conorii (strain ATCC VR-613 / Malish 7)).